Consider the following 959-residue polypeptide: E3 ubiquitin-protein ligase NEDD4-like (959 aa).

Residues 10–130 (PWHGVCVPVC…TEDPTMERPY (121 aa)) form the C2 domain. Disordered regions lie at residues 183–206 (SNDS…WEEK), 248–275 (AAHR…DVPE), and 289–316 (DSLG…EELS). A WW 1 domain is found at 197 to 230 (PPLPPGWEEKVDNLGRTYYVNHNNRTTQWHRPSL). Phosphoserine is present on S316. The residue at position 322 (T322) is a Phosphothreonine. S346 bears the Phosphoserine; by WNK1 and WNK4 mark. One can recognise a WW 2 domain in the interval 369–402 (PGLPSGWEERKDAKGRTYYVNHNNRTTTWTRPIM). A disordered region spans residues 408-478 (GASGSATNSN…YNSPKPQHKV (71 aa)). S430 bears the Phosphoserine mark. S432 is modified (phosphoserine; by SGK1). The residue at position 433 (S433) is a Phosphoserine; by WNK1 and WNK4. A compositionally biased stretch (basic and acidic residues) spans 444–455 (GAKDSPVRRAVK). Position 448 is a phosphoserine; by SGK1 (S448). S459, S463, S467, and S471 each carry phosphoserine. WW domains are found at residues 481–514 (SFLP…DPRL) and 532–565 (GPLP…DPRL). One can recognise an HECT domain in the interval 624–958 (RPDVLKARLW…VENAQGFEGV (335 aa)). C926 (glycyl thioester intermediate) is an active-site residue.

In terms of assembly, interacts with UBE2E3. Interacts with NDFIP1; this interaction activates the E3 ubiquitin-protein ligase. Interacts with NDFIP2; this interaction activates the E3 ubiquitin-protein ligase. Interacts (via WW domains) with SCN1A. Interacts (via WW domains) with SCN2A. Interacts (via WW domains) with SCN3A. Interacts (via WW domains) with SCN5A. Interacts (via WW domains) with SCN8A. Interacts (via WW domains) with SCN9A. Interacts (via WW domains) with SCN10A. Interacts (via WW domains) with CLCN5. Interacts with SMAD2. Interacts with SMAD3. Interacts with SMAD6. Interacts with SMAD7. The phosphorylated form interacts with 14-3-3 proteins. Interacts with TNK2. Interacts with WNK1. Interacts with SGK1. Interacts (via C2 domain) with NPC2. Interacts with ARRDC4. Interacts with KCNQ1; promotes internalization of KCNQ1. Interacts (via domains WW1, 3 and 4) with USP36; the interaction inhibits ubiquitination of, at least, NTRK1, KCNQ2 and KCNQ3 by NEDD4L. Interacts with PRRG4 (via cytoplasmic domain). Interacts with LDLRAD3; the interaction is direct. Interacts with TTYH2 and TTYH3. In terms of processing, phosphorylated; which impairs interaction with SCNN. Interaction with YWHAH inhibits dephosphorylation. Auto-ubiquitinated.

The protein resides in the cytoplasm. It localises to the golgi apparatus. The protein localises to the endosome. It is found in the multivesicular body. It catalyses the reaction S-ubiquitinyl-[E2 ubiquitin-conjugating enzyme]-L-cysteine + [acceptor protein]-L-lysine = [E2 ubiquitin-conjugating enzyme]-L-cysteine + N(6)-ubiquitinyl-[acceptor protein]-L-lysine.. It participates in protein modification; protein ubiquitination. Its activity is regulated as follows. Activated by NDFIP1- and NDFIP2-binding. In terms of biological role, E3 ubiquitin-protein ligase which accepts ubiquitin from an E2 ubiquitin-conjugating enzyme in the form of a thioester and then directly transfers the ubiquitin to targeted substrates. Inhibits TGF-beta signaling by triggering SMAD2 and TGFBR1 ubiquitination and proteasome-dependent degradation. Promotes ubiquitination and internalization of various plasma membrane channels such as ENaC, Nav1.2, Nav1.3, Nav1.5, Nav1.7, Nav1.8, Kv1.3, KCNH2, EAAT1 or CLC5. Promotes ubiquitination and degradation of SGK1 and TNK2. Ubiquitinates BRAT1 and this ubiquitination is enhanced in the presence of NDFIP1. Plays a role in dendrite formation by melanocytes. Involved in the regulation of TOR signaling. Ubiquitinates TTYH2 and TTYH3 and regulates protein levels of TTYH2. This Pongo abelii (Sumatran orangutan) protein is E3 ubiquitin-protein ligase NEDD4-like (NEDD4L).